Reading from the N-terminus, the 151-residue chain is Endoribonuclease YbeY (151 aa).

The Zn(2+) site is built by His117, His121, and His127.

This sequence belongs to the endoribonuclease YbeY family. Zn(2+) serves as cofactor.

Its subcellular location is the cytoplasm. In terms of biological role, single strand-specific metallo-endoribonuclease involved in late-stage 70S ribosome quality control and in maturation of the 3' terminus of the 16S rRNA. The protein is Endoribonuclease YbeY of Alkaliphilus oremlandii (strain OhILAs) (Clostridium oremlandii (strain OhILAs)).